The sequence spans 518 residues: T-box transcription factor TBX5 (518 aa).

A disordered region spans residues 1-46 (MADTDEGFGLARTPLEPDSKDRSCDSKPESALGAPSKSPSSPQAAF). Basic and acidic residues predominate over residues 15–28 (LEPDSKDRSCDSKP). Residues 34 to 45 (APSKSPSSPQAA) are compositionally biased toward low complexity. Positions 58 to 238 (LHERELWLKF…NNPFAKGFRG (181 aa)) form a DNA-binding region, T-box. Disordered stretches follow at residues 254–307 (EYPV…LLPP) and 330–352 (ECSS…EEDT). The span at 269–301 (SNHSPFSSETRALSTSSNLGSQYQCENGVSGPS) shows a compositional bias: polar residues. An N6-acetyllysine modification is found at Lys339.

In terms of assembly, monomer. Homodimer (via the T-box); binds DNA as homodimer. Interacts (via the T-box) with NKX2-5 (via the homeobox); this complex binds DNA. Interacts with GATA4. Interacts with KAT2A and KAT2B. Post-translationally, acetylation at Lys-339 by KAT2A and KAT2B promotes nuclear retention.

The protein resides in the nucleus. It localises to the cytoplasm. Functionally, DNA-binding protein that regulates the transcription of several genes and is involved in heart development and limb pattern formation. Binds to the core DNA motif of NPPA promoter. The polypeptide is T-box transcription factor TBX5 (Tbx5) (Mus musculus (Mouse)).